The primary structure comprises 89 residues: Putative membrane protein insertion efficiency factor (89 aa).

A disordered region spans residues 68–89 (VPPPNSDARNAPHEAEASSHRL). The span at 77–89 (NAPHEAEASSHRL) shows a compositional bias: basic and acidic residues.

This sequence belongs to the UPF0161 family.

It is found in the cell inner membrane. Its function is as follows. Could be involved in insertion of integral membrane proteins into the membrane. In Burkholderia thailandensis (strain ATCC 700388 / DSM 13276 / CCUG 48851 / CIP 106301 / E264), this protein is Putative membrane protein insertion efficiency factor.